The following is a 255-amino-acid chain: Protein BEAN1 (255 aa).

A helical membrane pass occupies residues 37–57; that stretch reads VLVASAVIGVVITLSCITIIV. A compositionally biased stretch (basic residues) spans 69 to 90; it reads QRHHHRHRRHHHHHRHRRRRHR. Disordered stretches follow at residues 69 to 109 and 160 to 255; these read QRHH…MPYA and DAPP…ERIV. Polar residues predominate over residues 193–206; sequence QRTQGQSRLHTVSM. Low complexity predominate over residues 217–226; that stretch reads GTGSPSDLLP. The span at 234–243 shows a compositional bias: polar residues; it reads PSNSQGSPIP. The segment covering 244–255 has biased composition (pro residues); it reads TQAPMPSPERIV.

Interacts with NEDD4.

Its subcellular location is the membrane. This chain is Protein BEAN1 (Bean1), found in Mus musculus (Mouse).